A 484-amino-acid polypeptide reads, in one-letter code: Glutamate--tRNA ligase (484 aa).

A 'HIGH' region motif is present at residues 11 to 21 (PSPTGYLHIGN). The 'KMSKS' region motif lies at 252–256 (KLSKR). Lysine 255 contacts ATP.

This sequence belongs to the class-I aminoacyl-tRNA synthetase family. Glutamate--tRNA ligase type 1 subfamily. In terms of assembly, monomer.

It localises to the cytoplasm. It carries out the reaction tRNA(Glu) + L-glutamate + ATP = L-glutamyl-tRNA(Glu) + AMP + diphosphate. Its function is as follows. Catalyzes the attachment of glutamate to tRNA(Glu) in a two-step reaction: glutamate is first activated by ATP to form Glu-AMP and then transferred to the acceptor end of tRNA(Glu). This chain is Glutamate--tRNA ligase, found in Staphylococcus aureus (strain Mu3 / ATCC 700698).